Reading from the N-terminus, the 429-residue chain is MVLISETSDDGSTGGDHQIKKPKKEEDRNKKLKEKVQVSLPIPEELILRCFLLVRRCHHPSLSLVCRSFHSLMSKLYDDRLRLGYTENVLYAYVGFPPVENPSWYILHRKPYRNLPNTISLKLCKIDSLPPMPWGSTVVTIGSDIYVIGGRVGEKLLEDVGVGYNKPISGGRRGETSIRGGHAGERRISDVTHINCRFHEYRSLPSMKMARCRAAAGVIDGKIYVIGGRKVRTSDWVEVFDLKKQSWSSVPGPYPEAFGRGEFLTYAVMKEKIYCLDLTRNIHIYDPKESKWESWTHGPLSASWNDSSCVVDNLLFCINTSVYFLGWPIKIYDPEKKTWFYLQGLQGFPANGLFVDGYKMANFGGKLVILSADVHRLRRYDCRKREIWCIEIAWERKEDGTFWGKVESVAVVLTPAKTTSVDICGTVTV.

The interval 1–32 is disordered; sequence MVLISETSDDGSTGGDHQIKKPKKEEDRNKKL. Residues 17–29 show a composition bias toward basic and acidic residues; that stretch reads HQIKKPKKEEDRN. Residues 37–84 form the F-box domain; sequence QVSLPIPEELILRCFLLVRRCHHPSLSLVCRSFHSLMSKLYDDRLRLG. 5 Kelch repeats span residues 144–175, 176–221, 222–267, 269–313, and 315–359; these read DIYV…RRGE, TSIR…VIDG, KIYV…LTYA, MKEK…VVDN, and LFCI…DGYK.

This Arabidopsis thaliana (Mouse-ear cress) protein is Putative F-box/kelch-repeat protein At2g21680.